Consider the following 296-residue polypeptide: MSATQGPLTEAANGCDDTGLGKTKNHWDGAVPRTTGEPRSLLGENRASSVLTTGLGPKPGPVWVDPRIRFHGVSESLPLTDTPWGPPPSPMDALGHGVMTPSGLKWCPPPPPKTESRSFLELLAMHQKAQADRDDTVTGETETTAREEDDVIFVEETNVNNPDVIEVIELKDVTETGHGTLKRRYPMRVRRAPKRLVLDEQVVDDYPADSDDDTDAESDDAMSVLSDTCRTDDDASSVSSCGSFITDGSGSEESEDSASDETDDSDFDTDELTSESEEEESESESESESESESESE.

2 disordered regions span residues 1–45 (MSAT…LGEN) and 200–296 (EQVV…SESE). The span at 201 to 220 (QVVDDYPADSDDDTDAESDD) shows a compositional bias: acidic residues. Polar residues predominate over residues 236–249 (SSVSSCGSFITDGS). A compositionally biased stretch (acidic residues) spans 250-296 (GSEESEDSASDETDDSDFDTDELTSESEEEESESESESESESESESE).

This is an uncharacterized protein from Ictaluridae (bullhead catfishes).